We begin with the raw amino-acid sequence, 445 residues long: Glutamyl-tRNA(Gln) amidotransferase subunit D (445 aa).

The 333-residue stretch at 93 to 425 (SEIKIISTGG…EKIRSLMISN (333 aa)) folds into the Asparaginase/glutaminase domain. Active-site residues include Thr103, Thr179, Asp180, and Lys258.

The protein belongs to the asparaginase 1 family. GatD subfamily. Heterodimer of GatD and GatE.

It catalyses the reaction L-glutamyl-tRNA(Gln) + L-glutamine + ATP + H2O = L-glutaminyl-tRNA(Gln) + L-glutamate + ADP + phosphate + H(+). Functionally, allows the formation of correctly charged Gln-tRNA(Gln) through the transamidation of misacylated Glu-tRNA(Gln) in organisms which lack glutaminyl-tRNA synthetase. The reaction takes place in the presence of glutamine and ATP through an activated gamma-phospho-Glu-tRNA(Gln). The GatDE system is specific for glutamate and does not act on aspartate. The polypeptide is Glutamyl-tRNA(Gln) amidotransferase subunit D (Saccharolobus islandicus (strain M.16.27) (Sulfolobus islandicus)).